The primary structure comprises 434 residues: UDP-N-acetylmuramoylalanine--D-glutamate ligase (434 aa).

126-132 serves as a coordination point for ATP; sequence GTSGKTT.

It belongs to the MurCDEF family.

It localises to the cytoplasm. The enzyme catalyses UDP-N-acetyl-alpha-D-muramoyl-L-alanine + D-glutamate + ATP = UDP-N-acetyl-alpha-D-muramoyl-L-alanyl-D-glutamate + ADP + phosphate + H(+). It functions in the pathway cell wall biogenesis; peptidoglycan biosynthesis. In terms of biological role, cell wall formation. Catalyzes the addition of glutamate to the nucleotide precursor UDP-N-acetylmuramoyl-L-alanine (UMA). In Desulfovibrio desulfuricans (strain ATCC 27774 / DSM 6949 / MB), this protein is UDP-N-acetylmuramoylalanine--D-glutamate ligase.